We begin with the raw amino-acid sequence, 290 residues long: MAPQSTKFALITGCGAGGIGEALILEYLRRGIHPIATLLPFESSEHLDKAGITWFKLDVTNEESVVQLKKDVSELTKGRLDFLVNNAGICYTMTAIDTDVKSVQRMFDVNLFGPMRMVHHFHDMLIASSGIIVNIGSIGGVVPFVYGSSYNASKAALAHWGNSLRVELAPLGVRVLVIISGEVGTNILKNDHGRTLPEGSYYSPMAEEFKNHVHRTPDAATDRFVYAKNVVGESLKKSPTTWFWTGSYSGVIRFLHTFFPKTVFDRWFSSLFNLAKLKEAHDAAMKKKVA.

4 residues coordinate NADP(+): Ile11, Thr37, Asp58, and Asn86. Residues 125–145 (LIASSGIIVNIGSIGGVVPFV) traverse the membrane as a helical segment. Tyr150 contacts NADP(+). Catalysis depends on Tyr150, which acts as the Proton donor. N-linked (GlcNAc...) asparagine glycosylation occurs at Asn151. Positions 154, 183, and 185 each coordinate NADP(+). Lys154 (lowers pKa of active site Tyr) is an active-site residue.

The protein belongs to the short-chain dehydrogenases/reductases (SDR) family.

Its subcellular location is the membrane. Its function is as follows. Short-chain dehydrogenase; part of the gene cluster that mediates the biosynthesis of sordarial, a salicylic aldehyde structurally related to the phytotoxin pyriculol. The most interesting aspect of this pathway is formation of an aromatic product from the highly reducing polyketide synthase srdA. SrdA synthesizes a reduced polyketide chain from one molecule of acetyl-CoA and five molecules of malonyl-CoA. The polyketide chain is then reductively released as an aldehyde. The oxidoreductases srdC, srdD and srdE then oxidize one of the hydroxy groups to facilitate the intramolecular aldol condensation, followed by dehydration to yield a salicylic aldehyde. This aldehyde can undergo facile reduction by endogenous reductases to yield the alcohol 1-hydroxy-2-hydroxymethyl-3-pent-1,3-dienylbenzene. The flavin-dependent srdI counteract against the propensity of the aldehydes to be reduced under physiological conditions and is responsible for reoxidizing 1-hydroxy-2-hydroxymethyl-3-pent-1,3-dienylbenzene back to the salicylic aldehyde. This salicylic aldehyde is then selectively epoxidized by the cupin-domain-containing oxidoreductase srdB to yield the epoxide, which can be hydrolyzed stereoselectively by the hydrolase srdG to give the final product sordarial. The chain is Short-chain dehydrogenase srdE from Neurospora crassa (strain ATCC 24698 / 74-OR23-1A / CBS 708.71 / DSM 1257 / FGSC 987).